Consider the following 1450-residue polypeptide: Auxilin-like protein 1 (1450 aa).

Disordered stretches follow at residues asparagine 117 to serine 142, serine 241 to serine 318, aspartate 357 to leucine 383, asparagine 459 to glutamate 480, serine 512 to methionine 541, glutamate 556 to glutamate 575, aspartate 908 to phenylalanine 946, glutamate 961 to histidine 1046, glycine 1077 to glutamine 1168, alanine 1192 to alanine 1241, and alanine 1254 to alanine 1328. A coiled-coil region spans residues glutamate 316–serine 344. The segment covering aspartate 357–threonine 366 has biased composition (basic and acidic residues). 7 stretches are compositionally biased toward basic and acidic residues: residues serine 512–asparagine 524, serine 564–glutamate 575, aspartate 908–glutamine 923, arginine 1037–histidine 1046, asparagine 1117–methionine 1131, glutamate 1147–glutamine 1168, and alanine 1192–serine 1226. Coiled-coil stretches lie at residues serine 1142–alanine 1184 and glutamate 1219–lysine 1257. Residues serine 1270–serine 1299 show a composition bias toward low complexity. A compositionally biased stretch (basic and acidic residues) spans proline 1310 to alanine 1328. Residues arginine 1327–alanine 1355 adopt a coiled-coil conformation. Positions threonine 1377 to arginine 1450 constitute a J domain.

This is Auxilin-like protein 1 (AUL1) from Arabidopsis thaliana (Mouse-ear cress).